A 330-amino-acid polypeptide reads, in one-letter code: 2-alkyl-3-oxoalkanoate reductase (330 aa).

Tyr139 (proton acceptor) is an active-site residue. Lys143 serves as a coordination point for NADP(+).

The protein belongs to the 3-beta-HSD family. As to quaternary structure, homodimer.

It carries out the reaction a (2R,3S)-2-alkyl-3-hydroxyalkanoate + NADP(+) = an (R)-2-alkyl-3-oxoalkanoate + NADPH + H(+). Involved in olefin biosynthesis. Catalyzes the reversible stereospecific NADPH-dependent reduction of 2-alkyl-3-oxoalkanoic acids to 2-alkyl-3-hydroxyalkanoic acids. In the oxidative direction, syn-2-decyl-3-hydroxytetradecanoic acid is the preferred substrate. In the reductive direction, (2R/S)-2-hexyl-3-ketodecanoic acid is accepted as substrate. This chain is 2-alkyl-3-oxoalkanoate reductase, found in Stenotrophomonas maltophilia (strain K279a).